Consider the following 290-residue polypeptide: 33 kDa chaperonin (290 aa).

Intrachain disulfides connect Cys235–Cys237 and Cys268–Cys271.

The protein belongs to the HSP33 family. In terms of processing, under oxidizing conditions two disulfide bonds are formed involving the reactive cysteines. Under reducing conditions zinc is bound to the reactive cysteines and the protein is inactive.

The protein localises to the cytoplasm. Redox regulated molecular chaperone. Protects both thermally unfolding and oxidatively damaged proteins from irreversible aggregation. Plays an important role in the bacterial defense system toward oxidative stress. The sequence is that of 33 kDa chaperonin from Streptococcus uberis (strain ATCC BAA-854 / 0140J).